The chain runs to 255 residues: CD320 antigen (255 aa).

Positions 1-29 (MNGWVARGLARRAAALGLGLRVLLCFGLC) are cleaved as a signal peptide. Residues 30-203 (LEIAPTPIQT…SVQSGNRNVY (174 aa)) lie on the Extracellular side of the membrane. LDL-receptor class A domains follow at residues 52 to 89 (SCPP…EECG) and 120 to 157 (SCPE…LGCG). Cystine bridges form between C53–C66, C60–C79, C73–C88, C121–C134, C128–C147, and C141–C156. Ca(2+) contacts are provided by W71, D74, D76, D78, D84, and E85. Positions 139, 142, 144, 146, 152, and 153 each coordinate Ca(2+). 2 N-linked (GlcNAc...) asparagine glycosylation sites follow: N177 and N183. The helical transmembrane segment at 204 to 224 (GIIAAVAVLSISLAAGILFAL) threads the bilayer. Residues 225 to 255 (SRLCAQGCLAPLGLLVSMKGSLQPEKKTSVL) are Cytoplasmic-facing.

In terms of assembly, interacts (via LDL-receptor class A domains) with TCN2.

It is found in the cell membrane. Receptor for transcobalamin saturated with cobalamin (TCbl). Plays an important role in cobalamin uptake. Plasma membrane protein that is expressed on follicular dendritic cells (FDC) and mediates interaction with germinal center B cells. Functions as a costimulator to promote B cell responses to antigenic stimuli; promotes B cell differentiation and proliferation. Germinal center-B (GC-B) cells differentiate into memory B-cells and plasma cells (PC) through interaction with T-cells and follicular dendritic cells (FDC). CD320 augments the proliferation of PC precursors generated by IL-10. This is CD320 antigen (CD320) from Bos taurus (Bovine).